The primary structure comprises 690 residues: Cysteine-rich receptor-like protein kinase 21 (690 aa).

The signal sequence occupies residues 1-24 (MQKNKMVDLRAIFWFVVISSCAVA). One can recognise a Gnk2-homologous 1 domain in the interval 25 to 129 (APTCIQRSDF…CLVRYSNHLI (105 aa)). The Extracellular portion of the chain corresponds to 25 to 281 (APTCIQRSDF…KDGKNISTGS (257 aa)). Residues Asn130, Asn148, Asn155, Asn220, Asn268, and Asn276 are each glycosylated (N-linked (GlcNAc...) asparagine). In terms of domain architecture, Gnk2-homologous 2 spans 140 to 246 (AEYIEYKYNT…CFMRWDLQPF (107 aa)). A helical membrane pass occupies residues 282–302 (IVAIAVVSVVVSTVLLALGYA). At 303–690 (VSRRRKAYQS…DASITSVRPR (388 aa)) the chain is on the cytoplasmic side. A Protein kinase domain is found at 363–640 (FHKSNKLGHG…IFRMLTNVSI (278 aa)). Residues 369–377 (LGHGGFGAV) and Lys391 contribute to the ATP site. Tyr436 carries the post-translational modification Phosphotyrosine. The active-site Proton acceptor is the Asp488. Phosphoserine is present on Ser492. Thr528 carries the phosphothreonine modification. Tyr536 carries the phosphotyrosine modification.

This sequence belongs to the protein kinase superfamily. Ser/Thr protein kinase family. CRK subfamily.

Its subcellular location is the membrane. It catalyses the reaction L-seryl-[protein] + ATP = O-phospho-L-seryl-[protein] + ADP + H(+). The catalysed reaction is L-threonyl-[protein] + ATP = O-phospho-L-threonyl-[protein] + ADP + H(+). This chain is Cysteine-rich receptor-like protein kinase 21 (CRK21), found in Arabidopsis thaliana (Mouse-ear cress).